Consider the following 654-residue polypeptide: DNA ligase (654 aa).

Residues 32-36 and 81-82 each bind NAD(+); these read DAVYD and SL. Residue K112 is the N6-AMP-lysine intermediate of the active site. Positions 133, 167, and 306 each coordinate NAD(+). Zn(2+)-binding residues include C400, C403, C416, and C421. Positions 577–654 constitute a BRCT domain; it reads ESSSIFSHKT…EEELLKYLKE (78 aa).

Belongs to the NAD-dependent DNA ligase family. LigA subfamily. Requires Mg(2+) as cofactor. Mn(2+) is required as a cofactor.

It catalyses the reaction NAD(+) + (deoxyribonucleotide)n-3'-hydroxyl + 5'-phospho-(deoxyribonucleotide)m = (deoxyribonucleotide)n+m + AMP + beta-nicotinamide D-nucleotide.. Functionally, DNA ligase that catalyzes the formation of phosphodiester linkages between 5'-phosphoryl and 3'-hydroxyl groups in double-stranded DNA using NAD as a coenzyme and as the energy source for the reaction. It is essential for DNA replication and repair of damaged DNA. This chain is DNA ligase, found in Helicobacter acinonychis (strain Sheeba).